Consider the following 287-residue polypeptide: ATP synthase gamma chain (287 aa).

The protein belongs to the ATPase gamma chain family. As to quaternary structure, F-type ATPases have 2 components, CF(1) - the catalytic core - and CF(0) - the membrane proton channel. CF(1) has five subunits: alpha(3), beta(3), gamma(1), delta(1), epsilon(1). CF(0) has three main subunits: a, b and c.

It is found in the cell inner membrane. Functionally, produces ATP from ADP in the presence of a proton gradient across the membrane. The gamma chain is believed to be important in regulating ATPase activity and the flow of protons through the CF(0) complex. This is ATP synthase gamma chain from Edwardsiella ictaluri (strain 93-146).